The primary structure comprises 150 residues: Transcriptional regulator MraZ (150 aa).

2 SpoVT-AbrB domains span residues 5–51 (VANL…PQPE) and 80–123 (ATEC…DEDT).

It belongs to the MraZ family. As to quaternary structure, forms oligomers.

It localises to the cytoplasm. The protein resides in the nucleoid. In Thioalkalivibrio sulfidiphilus (strain HL-EbGR7), this protein is Transcriptional regulator MraZ.